The sequence spans 208 residues: Guanylate kinase (208 aa).

Positions 21-201 (GRVVVLSGPS…ACAELVSLLV (181 aa)) constitute a Guanylate kinase-like domain. 28-35 (GPSAVGKS) provides a ligand contact to ATP.

This sequence belongs to the guanylate kinase family.

The protein localises to the cytoplasm. It catalyses the reaction GMP + ATP = GDP + ADP. Its function is as follows. Essential for recycling GMP and indirectly, cGMP. In Mycobacterium bovis (strain ATCC BAA-935 / AF2122/97), this protein is Guanylate kinase (gmk).